A 174-amino-acid polypeptide reads, in one-letter code: Co-chaperone protein HscB (174 aa).

A J domain is found at 2–74 (NYFALFDLPR…LNRAIYFLCL (73 aa)).

The protein belongs to the HscB family. As to quaternary structure, interacts with HscA and stimulates its ATPase activity. Interacts with IscU.

Co-chaperone involved in the maturation of iron-sulfur cluster-containing proteins. Seems to help targeting proteins to be folded toward HscA. This chain is Co-chaperone protein HscB, found in Buchnera aphidicola subsp. Acyrthosiphon pisum (strain 5A).